The sequence spans 92 residues: Large ribosomal subunit protein eL43 (92 aa).

The C4-type zinc finger occupies 39–60 (CEFCGKFAVKRKAVGIWGCKDC).

This sequence belongs to the eukaryotic ribosomal protein eL43 family.

The sequence is that of Large ribosomal subunit protein eL43 (RPL37A) from Pseudotsuga menziesii (Douglas-fir).